A 620-amino-acid polypeptide reads, in one-letter code: Pentatricopeptide repeat-containing protein At5g66520 (620 aa).

PPR repeat units lie at residues 79-113 (DTFL…SAPH), 114-148 (NAYT…GYEN), 149-179 (DVYA…IPEP), 180-210 (DDVS…MAEK), 211-245 (NAIS…DVEP), 246-280 (DNVS…RIRM), 281-311 (DSVL…IKKK), 312-346 (SVQA…GIKP), 347-382 (NVIT…NLKP), and 383-413 (TIEH…MPLK). The tract at residues 418-493 (IWGALLKACR…VPGCSTISLE (76 aa)) is type E motif. Residues 494 to 524 (GTTHEFLAGDRSHPEIEKIQSKWRIMRRKLE) form a type E(+) motif region. The segment at 525-620 (ENGYVPELEE…DGKCSCGDYW (96 aa)) is type DYW motif.

This sequence belongs to the PPR family. PCMP-H subfamily.

The protein is Pentatricopeptide repeat-containing protein At5g66520 (PCMP-H61) of Arabidopsis thaliana (Mouse-ear cress).